The sequence spans 372 residues: Queuine tRNA-ribosyltransferase (372 aa).

The active-site Proton acceptor is Asp92. Residues 92–96 (DSGGY), Asp146, Gln188, and Gly215 contribute to the substrate site. Residues 246 to 252 (GIGSLRE) are RNA binding. Asp265 acts as the Nucleophile in catalysis. The tract at residues 270 to 274 (TRLGR) is RNA binding; important for wobble base 34 recognition. Cys303, Cys305, Cys308, and His334 together coordinate Zn(2+).

This sequence belongs to the queuine tRNA-ribosyltransferase family. As to quaternary structure, homodimer. Within each dimer, one monomer is responsible for RNA recognition and catalysis, while the other monomer binds to the replacement base PreQ1. Requires Zn(2+) as cofactor.

The enzyme catalyses 7-aminomethyl-7-carbaguanine + guanosine(34) in tRNA = 7-aminomethyl-7-carbaguanosine(34) in tRNA + guanine. The protein operates within tRNA modification; tRNA-queuosine biosynthesis. Its function is as follows. Catalyzes the base-exchange of a guanine (G) residue with the queuine precursor 7-aminomethyl-7-deazaguanine (PreQ1) at position 34 (anticodon wobble position) in tRNAs with GU(N) anticodons (tRNA-Asp, -Asn, -His and -Tyr). Catalysis occurs through a double-displacement mechanism. The nucleophile active site attacks the C1' of nucleotide 34 to detach the guanine base from the RNA, forming a covalent enzyme-RNA intermediate. The proton acceptor active site deprotonates the incoming PreQ1, allowing a nucleophilic attack on the C1' of the ribose to form the product. After dissociation, two additional enzymatic reactions on the tRNA convert PreQ1 to queuine (Q), resulting in the hypermodified nucleoside queuosine (7-(((4,5-cis-dihydroxy-2-cyclopenten-1-yl)amino)methyl)-7-deazaguanosine). The chain is Queuine tRNA-ribosyltransferase from Prochlorococcus marinus (strain MIT 9215).